Consider the following 359-residue polypeptide: B-cell differentiation antigen CD72 (359 aa).

Residues 1 to 95 (MAEAITYADL…LPCRTTCLRY (95 aa)) are Cytoplasmic-facing. Residues tyrosine 7 and tyrosine 39 each carry the phosphotyrosine; by LYN modification. Residues 96 to 116 (LLLGLLLTCLLLGVTAICLGV) traverse the membrane as a helical; Signal-anchor for type II membrane protein segment. The Extracellular segment spans residues 117 to 359 (RYLQVSQQLQ…CEMTAFRFPD (243 aa)). The N-linked (GlcNAc...) asparagine glycan is linked to asparagine 136. A C-type lectin domain is found at 232 to 352 (CCPSGWIMHQ…RSSLPYICEM (121 aa)). 3 disulfides stabilise this stretch: cysteine 233-cysteine 244, cysteine 261-cysteine 350, and cysteine 325-cysteine 342.

Homodimer; disulfide-linked. Associates with CD5. Interacts (tyrosine phosphorylated) with PTPN6/SHP-1. In terms of processing, phosphorylated upon engagement of the B-cell receptor, probably by LYN or SYK. Phosphorylation at Tyr-7 is important for interaction with PTPN6/SHP-1. In terms of tissue distribution, pre-B-cells and B-cells but not terminally differentiated plasma cells.

It localises to the membrane. Co-receptor of B cell receptor (BCR) that plays both positive and negative roles on B-cell functions. Recognizes the Sm/ribonucleoprotein (RNP) self-antigen ligand, and coligation of CD72 and BCR inhibits BCR signaling. Mechanistically, ligand binding leads to the recruitment of PTPN6/SHP-1 to the BCR complex which is inhibitory to BCR signaling. Also acts as a ligand for CD5 and thereby plays a critical role in maintaining regulatory T and B-cell homeostasis. The polypeptide is B-cell differentiation antigen CD72 (CD72) (Homo sapiens (Human)).